The sequence spans 249 residues: Ribosomal RNA small subunit methyltransferase G (249 aa).

Glycine 86, phenylalanine 91, and arginine 178 together coordinate S-adenosyl-L-methionine.

The protein belongs to the methyltransferase superfamily. RNA methyltransferase RsmG family.

It localises to the cytoplasm. Functionally, specifically methylates the N7 position of a guanine in 16S rRNA. The chain is Ribosomal RNA small subunit methyltransferase G from Bifidobacterium adolescentis (strain ATCC 15703 / DSM 20083 / NCTC 11814 / E194a).